The primary structure comprises 55 residues: MSTSRKLKSHGMRRSKSRSPHKGVKRGGSKRKYRKGNLKSRKRGDDANRNYRSHL.

Positions 1-42 are enriched in basic residues; that stretch reads MSTSRKLKSHGMRRSKSRSPHKGVKRGGSKRKYRKGNLKSRK. Residues 1-55 form a disordered region; that stretch reads MSTSRKLKSHGMRRSKSRSPHKGVKRGGSKRKYRKGNLKSRKRGDDANRNYRSHL. 2 positions are modified to phosphoserine: S9 and S40.

It belongs to the nuclear transition protein 1 family. Expressed by spermatids (at protein level).

The protein resides in the nucleus. The protein localises to the chromosome. Functionally, plays a key role in the replacement of histones to protamine in the elongating spermatids of mammals. In condensing spermatids, loaded onto the nucleosomes, where it promotes the recruitment and processing of protamines, which are responsible for histone eviction. This chain is Spermatid nuclear transition protein 1 (TNP1), found in Homo sapiens (Human).